The chain runs to 453 residues: DNA repair protein RadA (453 aa).

The segment at cysteine 10–cysteine 27 adopts a C4-type zinc-finger fold. Glycine 95–serine 102 contributes to the ATP binding site. Residues lysine 251–glycine 255 carry the RadA KNRFG motif motif. Positions aspartate 350 to serine 453 are lon-protease-like.

The protein belongs to the RecA family. RadA subfamily.

DNA-dependent ATPase involved in processing of recombination intermediates, plays a role in repairing DNA breaks. Stimulates the branch migration of RecA-mediated strand transfer reactions, allowing the 3' invading strand to extend heteroduplex DNA faster. Binds ssDNA in the presence of ADP but not other nucleotides, has ATPase activity that is stimulated by ssDNA and various branched DNA structures, but inhibited by SSB. Does not have RecA's homology-searching function. The polypeptide is DNA repair protein RadA (Streptococcus pyogenes serotype M6 (strain ATCC BAA-946 / MGAS10394)).